The primary structure comprises 346 residues: Phosphoribosylformylglycinamidine cyclo-ligase (346 aa).

Belongs to the AIR synthase family.

It localises to the cytoplasm. It catalyses the reaction 2-formamido-N(1)-(5-O-phospho-beta-D-ribosyl)acetamidine + ATP = 5-amino-1-(5-phospho-beta-D-ribosyl)imidazole + ADP + phosphate + H(+). It functions in the pathway purine metabolism; IMP biosynthesis via de novo pathway; 5-amino-1-(5-phospho-D-ribosyl)imidazole from N(2)-formyl-N(1)-(5-phospho-D-ribosyl)glycinamide: step 2/2. The polypeptide is Phosphoribosylformylglycinamidine cyclo-ligase (Bacillus velezensis (strain DSM 23117 / BGSC 10A6 / LMG 26770 / FZB42) (Bacillus amyloliquefaciens subsp. plantarum)).